A 731-amino-acid polypeptide reads, in one-letter code: Auxin response factor 3 (731 aa).

Residues 1–22 are compositionally biased toward low complexity; it reads MASSASSSSSPSSRPPLMALPS. The segment at 1–41 is disordered; that stretch reads MASSASSSSSPSSRPPLMALPSFYRPPWPSERGGEQRATDC. A DNA-binding region (TF-B3) is located at residues 191-293; that stretch reads FCKTLTASDT…ELRLGVRRAT (103 aa).

The protein belongs to the ARF family. In terms of assembly, homo and heterodimers. Expressed in roots, culms, leaves and young panicles.

Its subcellular location is the nucleus. Auxin response factors (ARFs) are transcriptional factors that bind specifically to the DNA sequence 5'-TGTCTC-3' found in the auxin-responsive promoter elements (AuxREs). The chain is Auxin response factor 3 (ARF3) from Oryza sativa subsp. japonica (Rice).